The chain runs to 629 residues: Polyadenylate-binding protein 2 (629 aa).

Positions 1–12 are enriched in polar residues; that stretch reads MAQVQLQGQTPN. The interval 1–25 is disordered; that stretch reads MAQVQLQGQTPNGSTAAVTSAPATS. Positions 13–25 are enriched in low complexity; sequence GSTAAVTSAPATS. RRM domains are found at residues 36–114, 124–201, 215–292, and 318–395; these read TSLY…YSHR, GNIF…PFLR, TNVY…RAQK, and SNLY…IAQR. Positions 480-507 are disordered; sequence PQQQRPGGGRRPGGIQHSQQQNPMMQQQ. Residues 492 to 507 show a composition bias toward low complexity; the sequence is GGIQHSQQQNPMMQQQ. Positions 539–616 constitute a PABC domain; sequence TIGALASNLS…AMDVLRSVAA (78 aa).

The protein belongs to the polyadenylate-binding protein type-1 family. Interacts with eIF-iso4G. Interacts with ERD15/CID1 and CID7. Interacts with Turnip mosaic virus (TuMV) VPg-Pro and RNA-dependent RNA polymerase (RdRp). In terms of tissue distribution, expressed in all organs (at the protein level) but under distinct spatial and temporal regulation within each organ.

The protein localises to the cytoplasm. The protein resides in the nucleus. In terms of biological role, binds the poly(A) tail of mRNA. Appears to be an important mediator of the multiple roles of the poly(A) tail in mRNA biogenesis, stability and translation. In the cytoplasm, affects both translation and mRNA decay. Stimulates translation by interaction with translation initiation factor eIF4G, a subunit of the cap-binding complex eIF4F, bringing the 5'- and 3'-ends of the mRNA in proximity. The formation of this circular mRNP structure appears to be critical for the synergistic effects of the cap and the poly(A) tail in facilitating translation initiation, recycling of ribosomes, and mRNA stability. During infection with potyvirus TuMV, acts as a potential integral component of the viral replicase complex that could play an important role in the regulation of potyviral RNA-dependent RNA polymerase (RdRp). Binds to uridylated mRNAs and determines the size of uridine extensions. Limits uridine extension by URT1, likely by binding to the oligo(A) tail and preventing URT1 access. This chain is Polyadenylate-binding protein 2 (PAB2), found in Arabidopsis thaliana (Mouse-ear cress).